Consider the following 772-residue polypeptide: MFANSARNALKKRPQNLQPFRFQGCLFSKRANRPLTTKVQHLIYASVDDKALVTLFDQPRSTLRSPFATTGLFGHPSLTHPRALISLADATVVRAQLLTDRILRARESRTELLRVVKNLDRLSDMLCGVIDLAELVRNAHPDRSWVDAANRAYETLCEFMNVLNTHVGLYEVLKAVLSDPSIVKTLGPEAHQTALIFWRDFEKSAIDLPAEQRKKFVSLSSDILVLGRQFLEGANAPRPPASIKPSQLSGLKDKGMGVRLQLQAQFTQRDLQVYPGSLQAQMIMRSAPEEEPRRQVYLAANSSTPQQIEVLEKLLRTRAELARLVGRDSFAHMTLDDKMAKTPDNVWNFLDALMDHTKPFARRALHTLSERKQLHHGTSSLPIIQAWDRDFYCPPDPPAPPIPLPPLTLGTVFMGLSRLFQHMYGISLRPADSASGEVWHTDVQKLEVVDQDQGIIGWIYADLFARRGKASGAAHYTVRCSRRTDDDDESSDGTVEGAELLIYESQEFEAVKRHRLPNQDGIYQLPLVVLLCEFARPTPSKGPTVLEWHEVLTLFHEMGHAMHSMIGRTEYQNVAGTRCATDFVEFPSILMEHFLNSPTVLSLFDVDGTSTVRHIGNHHNDPCHFIDTYSQILLAAVDQVYHSPAVLDPTFDSTAELAKVHNTRGLIPYVPGTSFQTQFGHLYGYGATYYSYLLDRAIASRVWRNVFLDDPLDRETGEKFKCEVLRFGGGKDPWKMVSALLDVPELSTGDAEAMREIGRWKINSEIGVHGRH.

The N-terminal 42 residues, 1 to 42, are a transit peptide targeting the mitochondrion; it reads MFANSARNALKKRPQNLQPFRFQGCLFSKRANRPLTTKVQHL. Residue His556 participates in Zn(2+) binding. Residue Glu557 is part of the active site. The Zn(2+) site is built by His560 and His563.

Belongs to the peptidase M3 family. Zn(2+) is required as a cofactor.

It is found in the mitochondrion matrix. The catalysed reaction is Release of an N-terminal octapeptide as second stage of processing of some proteins imported into the mitochondrion.. Its function is as follows. Cleaves proteins, imported into the mitochondrion, to their mature size. While most mitochondrial precursor proteins are processed to the mature form in one step by mitochondrial processing peptidase (MPP), the sequential cleavage by MIP of an octapeptide after initial processing by MPP is a required step for a subgroup of nuclear-encoded precursor proteins destined for the matrix or the inner membrane. In Laccaria bicolor (strain S238N-H82 / ATCC MYA-4686) (Bicoloured deceiver), this protein is Mitochondrial intermediate peptidase (OCT1).